The following is a 573-amino-acid chain: ATP-dependent RNA helicase RhlB (573 aa).

Positions 9–37 (LTFSSFDLHPALVAGLESAGFTRCTPIQA) match the Q motif motif. A Helicase ATP-binding domain is found at 40-220 (LPVALPGGDV…YEHMNEPEKL (181 aa)). 53–60 (AQTGTGKT) contributes to the ATP binding site. The short motif at 166 to 169 (DEAD) is the DEAD box element. The Helicase C-terminal domain occupies 231-393 (RVRQRIYFPS…PVTTELLTPL (163 aa)). The segment covering 391–400 (TPLPRTPRAT) has biased composition (low complexity). The segment at 391–559 (TPLPRTPRAT…AKPSGSPSLL (169 aa)) is disordered. Residues 402-411 (EGEEVDDDAG) show a composition bias toward acidic residues. The segment covering 419 to 432 (REAREQRAADEARR) has biased composition (basic and acidic residues). Residues 435 to 449 (GRSGPGGASRSGSGG) are compositionally biased toward gly residues. Positions 450–461 (GRRDGAGADGKP) are enriched in basic and acidic residues. Over residues 476–499 (PAAAPSETPVVVAAAAETPAVTAA) the composition is skewed to low complexity. Residues 505–514 (PRKRRRRRNG) are compositionally biased toward basic residues. Low complexity-rich tracts occupy residues 516 to 528 (PVEG…ASTP) and 541 to 559 (VVAK…PSLL).

Belongs to the DEAD box helicase family. RhlB subfamily. As to quaternary structure, component of the RNA degradosome, which is a multiprotein complex involved in RNA processing and mRNA degradation.

The protein resides in the cytoplasm. It carries out the reaction ATP + H2O = ADP + phosphate + H(+). Its function is as follows. DEAD-box RNA helicase involved in RNA degradation. Has RNA-dependent ATPase activity and unwinds double-stranded RNA. The polypeptide is ATP-dependent RNA helicase RhlB (Xanthomonas campestris pv. campestris (strain B100)).